The primary structure comprises 259 residues: Global transcriptional regulator CodY (259 aa).

Residues 1–155 (MNLLAKTRKL…GATVVGMEIL (155 aa)) form a GAF domain region. Positions 203–222 (ASKIADRVGITRSVIVNALR) form a DNA-binding region, H-T-H motif.

This sequence belongs to the CodY family.

It localises to the cytoplasm. DNA-binding global transcriptional regulator which is involved in the adaptive response to starvation and acts by directly or indirectly controlling the expression of numerous genes in response to nutrient availability. During rapid exponential growth, CodY is highly active and represses genes whose products allow adaptation to nutrient depletion. This is Global transcriptional regulator CodY from Exiguobacterium sibiricum (strain DSM 17290 / CCUG 55495 / CIP 109462 / JCM 13490 / 255-15).